The following is an 895-amino-acid chain: Collagen alpha-1(I) chain (895 aa).

The tract at residues 1 to 895 (GPMGPSGPRG…PGPIGPPGPR (895 aa)) is disordered. The span at 20 to 39 (PQGFQGPPGEPGEPGASGPM) shows a compositional bias: low complexity. Over residues 51 to 65 (NGDDGEAGKPGRPGE) the composition is skewed to basic and acidic residues. At S90 the chain carries Phosphoserine. Composition is skewed to low complexity over residues 98 to 114 (DAGPAGPKGEPGSPGEN) and 137 to 150 (PAGARGNDGATGAA). Residues 152-164 (PPGPTGPAGPPGF) show a composition bias toward pro residues. Composition is skewed to low complexity over residues 198-237 (AGAAGPAGNPGADGQPGAKGANGAPGIAGAPGFPGARGPS), 302-336 (ERGFPGADGVAGPKGPAGERGAPGPAGPKGSPGEA), 348-374 (KGITGSPGSPGPDGKTGPPGPAGQDGR), 383-399 (ARGQAGVMGFPGPKGAA), 553-564 (TGPSGPAGPTGA), and 575-593 (AGFAGPPGADGQPGAKGDA). A Phosphoserine modification is found at S556. Residues 595–607 (PPGPAGPAGPPGP) show a composition bias toward pro residues. Low complexity-rich tracts occupy residues 608–635 (IGSVGAPGPKGSAGPPGATGFPGAAGRV), 660–669 (ETGPAGRPGE), and 679–703 (AGEKGSPGADGPAGAPGTPGPQGIA). Residues 741 to 751 (PPGPVGPPGIA) are compositionally biased toward pro residues. A compositionally biased stretch (low complexity) spans 753-768 (PPGESGREGSPGAEGS). Over residues 787–802 (AGPPGAPGAPGAPGPV) the composition is skewed to pro residues. Composition is skewed to low complexity over residues 823–838 (IGPVGARGPAGPQGPR) and 853–886 (PGEQGPSGASGPAGPRGPPGSAGAPGKDGINGIP).

Belongs to the fibrillar collagen family. As to quaternary structure, trimers of one alpha 2(I) and two alpha 1(I) chains. Prolines at the third position of the tripeptide repeating unit (G-X-Y) are hydroxylated in some or all of the chains. In terms of tissue distribution, forms the fibrils of tendon, ligaments and bones. In bones, the fibrils are mineralized with calcium hydroxyapatite.

The protein resides in the secreted. It is found in the extracellular space. Its subcellular location is the extracellular matrix. In terms of biological role, type I collagen is a member of group I collagen (fibrillar forming collagen). The chain is Collagen alpha-1(I) chain from Equus sp.